The following is a 657-amino-acid chain: Glycogen debranching enzyme (657 aa).

Aspartate 336 serves as the catalytic Nucleophile. The active-site Proton donor is the glutamate 371. Basic and acidic residues predominate over residues 458–467 (NEANGEENRD). A disordered region spans residues 458-479 (NEANGEENRDGTNNNYSNNHGK).

Belongs to the glycosyl hydrolase 13 family.

The enzyme catalyses Hydrolysis of (1-&gt;6)-alpha-D-glucosidic linkages to branches with degrees of polymerization of three or four glucose residues in limit dextrin.. Its pathway is glycan degradation; glycogen degradation. Functionally, removes maltotriose and maltotetraose chains that are attached by 1,6-alpha-linkage to the limit dextrin main chain, generating a debranched limit dextrin. The protein is Glycogen debranching enzyme of Shigella sonnei (strain Ss046).